The sequence spans 687 residues: RNA-binding protein VTS1 (687 aa).

Basic residues predominate over residues 1–10 (MASHTLRPHR). 3 disordered regions span residues 1-115 (MASH…TPEA), 248-341 (AAAK…PGIG), and 526-598 (SPFN…AGVA). Residues 29 to 41 (TRQSLGPPTSGNS) show a composition bias toward polar residues. Positions 52–68 (GLASPSSPSQPRHVSSS) are enriched in low complexity. Positions 287-301 (GLESNMSGRSRSKSP) are enriched in polar residues. Residues 305-324 (PRPKSTDFSGKPRESLRRES) are compositionally biased toward basic and acidic residues. Residues 526–539 (SPFNASAPSLQPGL) show a composition bias toward polar residues. Over residues 550–566 (QSSHLNQHYNQHQQQHQ) the composition is skewed to low complexity. Residues 585–597 (QTGGGGAGGGAGV) are compositionally biased toward gly residues. Residues 606–667 (KVLEDVPNWL…LKVFYNVRTK (62 aa)) enclose the SAM domain.

Belongs to the VTS1 family. In terms of assembly, monomer. Binds to RNA.

It localises to the cytoplasm. Its subcellular location is the cytosol. The protein resides in the P-body. RNA-binding protein involved in post-transcriptional regulation through transcript degradation. The protein is RNA-binding protein VTS1 of Cryptococcus neoformans var. grubii serotype A (strain H99 / ATCC 208821 / CBS 10515 / FGSC 9487) (Filobasidiella neoformans var. grubii).